The primary structure comprises 397 residues: uncharacterized protein (397 aa).

Positions 368–391 (TTKPGLHQPTQKRPTQTTSKPYIN) are disordered. Polar residues predominate over residues 375–388 (QPTQKRPTQTTSKP).

This is an uncharacterized protein from Acanthamoeba polyphaga mimivirus (APMV).